We begin with the raw amino-acid sequence, 335 residues long: Deoxyhypusine hydroxylase (335 aa).

HEAT-like PBS-type repeat units follow at residues 71-97, 104-130, 200-233, 238-264, and 271-298; these read LKHE…VAKD, CRHE…LRDN, LRYR…GLKD, FRHE…ALSN, and VRHE…FLND. Residues His73, Glu74, His106, and Glu107 each contribute to the Fe cation site. Positions 240, 241, 273, and 274 each coordinate Fe cation.

Belongs to the deoxyhypusine hydroxylase family. Fe(2+) serves as cofactor.

It is found in the cytoplasm. The protein localises to the nucleus. It carries out the reaction [eIF5A protein]-deoxyhypusine + AH2 + O2 = [eIF5A protein]-hypusine + A + H2O. It functions in the pathway protein modification; eIF5A hypusination. Catalyzes the hydroxylation of the N(6)-(4-aminobutyl)-L-lysine intermediate to form hypusine, an essential post-translational modification only found in mature eIF-5A factor. This chain is Deoxyhypusine hydroxylase (lia1), found in Aspergillus fumigatus (strain ATCC MYA-4609 / CBS 101355 / FGSC A1100 / Af293) (Neosartorya fumigata).